We begin with the raw amino-acid sequence, 343 residues long: L-threonine 3-dehydrogenase (343 aa).

Cys38 contributes to the Zn(2+) binding site. Active-site charge relay system residues include Thr40 and His43. Residues His63, Glu64, Cys93, Cys96, Cys99, and Cys107 each coordinate Zn(2+). NAD(+) is bound by residues Ile175, Asp195, Arg200, 262-264, and 286-287; these read LGI and IY.

This sequence belongs to the zinc-containing alcohol dehydrogenase family. Homotetramer. Zn(2+) is required as a cofactor.

The protein localises to the cytoplasm. The enzyme catalyses L-threonine + NAD(+) = (2S)-2-amino-3-oxobutanoate + NADH + H(+). It participates in amino-acid degradation; L-threonine degradation via oxydo-reductase pathway; glycine from L-threonine: step 1/2. Catalyzes the NAD(+)-dependent oxidation of L-threonine to 2-amino-3-ketobutyrate. The protein is L-threonine 3-dehydrogenase of Paraburkholderia phytofirmans (strain DSM 17436 / LMG 22146 / PsJN) (Burkholderia phytofirmans).